Reading from the N-terminus, the 621-residue chain is 1-deoxy-D-xylulose-5-phosphate synthase (621 aa).

Residues histidine 80 and 121 to 123 (GHS) each bind thiamine diphosphate. Aspartate 152 contacts Mg(2+). Residues 153–154 (GA), asparagine 181, tyrosine 288, and glutamate 370 contribute to the thiamine diphosphate site. Mg(2+) is bound at residue asparagine 181.

This sequence belongs to the transketolase family. DXPS subfamily. Homodimer. The cofactor is Mg(2+). Requires thiamine diphosphate as cofactor.

It catalyses the reaction D-glyceraldehyde 3-phosphate + pyruvate + H(+) = 1-deoxy-D-xylulose 5-phosphate + CO2. It participates in metabolic intermediate biosynthesis; 1-deoxy-D-xylulose 5-phosphate biosynthesis; 1-deoxy-D-xylulose 5-phosphate from D-glyceraldehyde 3-phosphate and pyruvate: step 1/1. Catalyzes the acyloin condensation reaction between C atoms 2 and 3 of pyruvate and glyceraldehyde 3-phosphate to yield 1-deoxy-D-xylulose-5-phosphate (DXP). This is 1-deoxy-D-xylulose-5-phosphate synthase from Aeromonas hydrophila subsp. hydrophila (strain ATCC 7966 / DSM 30187 / BCRC 13018 / CCUG 14551 / JCM 1027 / KCTC 2358 / NCIMB 9240 / NCTC 8049).